The sequence spans 352 residues: Holliday junction branch migration complex subunit RuvB (352 aa).

The tract at residues 4 to 185 is large ATPase domain (RuvB-L); that stretch reads ADRLIAATGP…FGIVQRLEFY (182 aa). ATP is bound by residues Ile24, Arg25, Gly66, Lys69, Thr70, Thr71, 132–134, Arg175, Tyr185, and Arg222; that span reads EDF. Thr70 contributes to the Mg(2+) binding site. Residues 186-256 are small ATPAse domain (RuvB-S); sequence STADLATIVS…IADLALNLLD (71 aa). The segment at 259-352 is head domain (RuvB-H); sequence ERGFDHQDRR…VDEFLDAVDD (94 aa). Residues Arg295, Arg314, and Arg319 each contribute to the DNA site.

It belongs to the RuvB family. As to quaternary structure, homohexamer. Forms an RuvA(8)-RuvB(12)-Holliday junction (HJ) complex. HJ DNA is sandwiched between 2 RuvA tetramers; dsDNA enters through RuvA and exits via RuvB. An RuvB hexamer assembles on each DNA strand where it exits the tetramer. Each RuvB hexamer is contacted by two RuvA subunits (via domain III) on 2 adjacent RuvB subunits; this complex drives branch migration. In the full resolvosome a probable DNA-RuvA(4)-RuvB(12)-RuvC(2) complex forms which resolves the HJ.

The protein resides in the cytoplasm. It carries out the reaction ATP + H2O = ADP + phosphate + H(+). In terms of biological role, the RuvA-RuvB-RuvC complex processes Holliday junction (HJ) DNA during genetic recombination and DNA repair, while the RuvA-RuvB complex plays an important role in the rescue of blocked DNA replication forks via replication fork reversal (RFR). RuvA specifically binds to HJ cruciform DNA, conferring on it an open structure. The RuvB hexamer acts as an ATP-dependent pump, pulling dsDNA into and through the RuvAB complex. RuvB forms 2 homohexamers on either side of HJ DNA bound by 1 or 2 RuvA tetramers; 4 subunits per hexamer contact DNA at a time. Coordinated motions by a converter formed by DNA-disengaged RuvB subunits stimulates ATP hydrolysis and nucleotide exchange. Immobilization of the converter enables RuvB to convert the ATP-contained energy into a lever motion, pulling 2 nucleotides of DNA out of the RuvA tetramer per ATP hydrolyzed, thus driving DNA branch migration. The RuvB motors rotate together with the DNA substrate, which together with the progressing nucleotide cycle form the mechanistic basis for DNA recombination by continuous HJ branch migration. Branch migration allows RuvC to scan DNA until it finds its consensus sequence, where it cleaves and resolves cruciform DNA. The protein is Holliday junction branch migration complex subunit RuvB of Pseudomonas fluorescens (strain ATCC BAA-477 / NRRL B-23932 / Pf-5).